A 130-amino-acid chain; its full sequence is Small ribosomal subunit protein uS11 (130 aa).

Belongs to the universal ribosomal protein uS11 family. Part of the 30S ribosomal subunit. Interacts with proteins S7 and S18. Binds to IF-3.

Functionally, located on the platform of the 30S subunit, it bridges several disparate RNA helices of the 16S rRNA. Forms part of the Shine-Dalgarno cleft in the 70S ribosome. This is Small ribosomal subunit protein uS11 from Borreliella afzelii (strain PKo) (Borrelia afzelii).